Consider the following 478-residue polypeptide: Pyruvate kinase (478 aa).

A substrate-binding site is contributed by Arg-35. Residues Asn-37, Ser-39, and Asp-69 each contribute to the K(+) site. Residue 37-40 participates in ATP binding; the sequence is NMSH. Residues Arg-76 and Lys-157 each coordinate ATP. Glu-219 contacts Mg(2+). Gly-242, Asp-243, and Thr-275 together coordinate substrate. Position 243 (Asp-243) interacts with Mg(2+).

The protein belongs to the pyruvate kinase family. Homotetramer. Mg(2+) is required as a cofactor. The cofactor is K(+).

It carries out the reaction pyruvate + ATP = phosphoenolpyruvate + ADP + H(+). It participates in carbohydrate degradation; glycolysis; pyruvate from D-glyceraldehyde 3-phosphate: step 5/5. In Methylorubrum extorquens (strain ATCC 14718 / DSM 1338 / JCM 2805 / NCIMB 9133 / AM1) (Methylobacterium extorquens), this protein is Pyruvate kinase (pyk).